A 209-amino-acid polypeptide reads, in one-letter code: V-type ATP synthase subunit D (209 aa).

It belongs to the V-ATPase D subunit family.

Functionally, produces ATP from ADP in the presence of a proton gradient across the membrane. This Anaeromyxobacter sp. (strain K) protein is V-type ATP synthase subunit D.